The chain runs to 64 residues: MSKQLKITLKKSAIGRPSKQRDTLRGMGLSKINKAVVLKDCTEIRGMINKVSHLVSCEEVEGVE.

The protein belongs to the universal ribosomal protein uL30 family. As to quaternary structure, part of the 50S ribosomal subunit.

This is Large ribosomal subunit protein uL30 from Syntrophus aciditrophicus (strain SB).